The primary structure comprises 307 residues: Elongation factor Ts (307 aa).

The tract at residues 79–82 (TDFV) is involved in Mg(2+) ion dislocation from EF-Tu.

It belongs to the EF-Ts family.

The protein localises to the cytoplasm. Functionally, associates with the EF-Tu.GDP complex and induces the exchange of GDP to GTP. It remains bound to the aminoacyl-tRNA.EF-Tu.GTP complex up to the GTP hydrolysis stage on the ribosome. The protein is Elongation factor Ts of Sinorhizobium fredii (strain NBRC 101917 / NGR234).